Here is a 60-residue protein sequence, read N- to C-terminus: Ras-related protein Rab-2A (60 aa).

The GTP site is built by Ser1, Cys2, and Thr19. Ser1 is a Mg(2+) binding site. The short motif at 16-24 is the Effector region element; that stretch reads HDLTIGVEF. Thr19 provides a ligand contact to Mg(2+).

This sequence belongs to the small GTPase superfamily. Rab family. As to quaternary structure, interacts with PRKCI. Interacts with TRIP11. Interacts (in GTP-bound form) with GARIN1B. Interacts (GTP-bound) with HOPS complex component VPS39; interaction contributes to obtaining a functional HOPS complex that promotes autophagosome-lysosome membrane fusion driven by STX17-SNAP29-VAMP8. May interact with VPS41. Mg(2+) is required as a cofactor. In terms of processing, prenylated. Prenylation is required for association with cellular membranes.

It localises to the endoplasmic reticulum-Golgi intermediate compartment membrane. Its subcellular location is the melanosome. The protein localises to the endoplasmic reticulum membrane. The protein resides in the golgi apparatus membrane. It is found in the cytoplasmic vesicle. It localises to the secretory vesicle. Its subcellular location is the acrosome. The protein localises to the autophagosome membrane. The catalysed reaction is GTP + H2O = GDP + phosphate + H(+). With respect to regulation, regulated by guanine nucleotide exchange factors (GEFs) which promote the exchange of bound GDP for free GTP, GTPase activating proteins (GAPs) which increase the GTP hydrolysis activity, and GDP dissociation inhibitors (GDIs) which inhibit the dissociation of the nucleotide from the GTPase. The small GTPases Rab are key regulators of intracellular membrane trafficking, from the formation of transport vesicles to their fusion with membranes. Rabs cycle between active GTP-bound and inactive GDP-bound states. In their active state, drive transport of vesicular carriers from donor organelles to acceptor organelles to regulate the membrane traffic that maintains organelle identity and morphology. RAB2A regulates autophagy by promoting autophagosome-lysosome fusion via recruitment of the HOPS endosomal tethering complex; this process involves autophagosomal RAB2A and lysosomal RAB39A recruitment of HOPS subcomplexes VPS39-VPS11 and VPS41-VPS16-VPS18-VPS33A, respectively, which assemble into a functional complex to mediate membrane tethering and SNAREs-driven membrane fusion. Required for protein transport from the endoplasmic reticulum to the Golgi complex. Regulates the compacted morphology of the Golgi. Together with RAB2B, redundantly required for efficient autophagic flux. The chain is Ras-related protein Rab-2A from Mesocricetus auratus (Golden hamster).